We begin with the raw amino-acid sequence, 291 residues long: Elongation factor Ts (291 aa).

The involved in Mg(2+) ion dislocation from EF-Tu stretch occupies residues 78-81; the sequence is TDFV.

This sequence belongs to the EF-Ts family.

Its subcellular location is the cytoplasm. Its function is as follows. Associates with the EF-Tu.GDP complex and induces the exchange of GDP to GTP. It remains bound to the aminoacyl-tRNA.EF-Tu.GTP complex up to the GTP hydrolysis stage on the ribosome. In Ureaplasma urealyticum serovar 10 (strain ATCC 33699 / Western), this protein is Elongation factor Ts.